Here is a 1433-residue protein sequence, read N- to C-terminus: DNA polymerase III PolC-type (1433 aa).

Positions 419 to 575 (FVVFDVETTG…YDAEATGHLL (157 aa)) constitute an Exonuclease domain.

It belongs to the DNA polymerase type-C family. PolC subfamily.

Its subcellular location is the cytoplasm. It catalyses the reaction DNA(n) + a 2'-deoxyribonucleoside 5'-triphosphate = DNA(n+1) + diphosphate. Functionally, required for replicative DNA synthesis. This DNA polymerase also exhibits 3' to 5' exonuclease activity. The protein is DNA polymerase III PolC-type of Halalkalibacterium halodurans (strain ATCC BAA-125 / DSM 18197 / FERM 7344 / JCM 9153 / C-125) (Bacillus halodurans).